Reading from the N-terminus, the 259-residue chain is Ribosomal RNA small subunit methyltransferase A (259 aa).

Positions 13, 15, 40, 61, 85, and 103 each coordinate S-adenosyl-L-methionine.

Belongs to the class I-like SAM-binding methyltransferase superfamily. rRNA adenine N(6)-methyltransferase family. RsmA subfamily.

It is found in the cytoplasm. It catalyses the reaction adenosine(1518)/adenosine(1519) in 16S rRNA + 4 S-adenosyl-L-methionine = N(6)-dimethyladenosine(1518)/N(6)-dimethyladenosine(1519) in 16S rRNA + 4 S-adenosyl-L-homocysteine + 4 H(+). Its function is as follows. Specifically dimethylates two adjacent adenosines (A1518 and A1519) in the loop of a conserved hairpin near the 3'-end of 16S rRNA in the 30S particle. May play a critical role in biogenesis of 30S subunits. This chain is Ribosomal RNA small subunit methyltransferase A, found in Neisseria gonorrhoeae (strain ATCC 700825 / FA 1090).